We begin with the raw amino-acid sequence, 425 residues long: Tyrosine--tRNA ligase (425 aa).

Tyr37 provides a ligand contact to L-tyrosine. A 'HIGH' region motif is present at residues 42–51; the sequence is PTADSLHLGH. L-tyrosine-binding residues include Tyr175 and Gln179. The 'KMSKS' region motif lies at 235–239; that stretch reads KFGKT. Lys238 provides a ligand contact to ATP. Residues 357 to 415 form the S4 RNA-binding domain; it reads QDLQQALVNAELAPSRGQARKLIEAKSVSINGSLQTDAEYTFGEDDRLFGQYTLLRRGK.

Belongs to the class-I aminoacyl-tRNA synthetase family. TyrS type 1 subfamily. Homodimer.

It localises to the cytoplasm. It carries out the reaction tRNA(Tyr) + L-tyrosine + ATP = L-tyrosyl-tRNA(Tyr) + AMP + diphosphate + H(+). In terms of biological role, catalyzes the attachment of tyrosine to tRNA(Tyr) in a two-step reaction: tyrosine is first activated by ATP to form Tyr-AMP and then transferred to the acceptor end of tRNA(Tyr). The protein is Tyrosine--tRNA ligase of Erwinia tasmaniensis (strain DSM 17950 / CFBP 7177 / CIP 109463 / NCPPB 4357 / Et1/99).